Consider the following 328-residue polypeptide: E3 ubiquitin-protein ligase SINA-like 5 (328 aa).

The disordered stretch occupies residues 1-77; the sequence is MARSGGNDGH…GSPKSSQPVK (77 aa). Composition is skewed to acidic residues over residues 10 to 20 and 27 to 62; these read HEEELDPELFE and GYED…ENVT. A compositionally biased stretch (polar residues) spans 63–77; it reads TDEQSGSPKSSQPVK. An RING-type; degenerate zinc finger spans residues 86–122; it reads CPTCCEPLKRPIYQCSNGHLACSSCCQKLNKKCSFCR. Residues 136-324 form an SBD region; that stretch reads VIEASIVPCP…MQICIAYGYK (189 aa). The SIAH-type; degenerate zinc-finger motif lies at 139-197; the sequence is ASIVPCPNAKHGCKETTTYCNQSSHEKVCKFVRCSCPVSNCNYVSSYSNLKSHACSTAH. The Zn(2+) site is built by Cys144, Cys151, His163, Cys167, Cys174, Cys179, His191, and His197.

This sequence belongs to the SINA (Seven in absentia) family.

The enzyme catalyses S-ubiquitinyl-[E2 ubiquitin-conjugating enzyme]-L-cysteine + [acceptor protein]-L-lysine = [E2 ubiquitin-conjugating enzyme]-L-cysteine + N(6)-ubiquitinyl-[acceptor protein]-L-lysine.. Its pathway is protein modification; protein ubiquitination. Its function is as follows. E3 ubiquitin-protein ligase that mediates ubiquitination and subsequent proteasomal degradation of target proteins. E3 ubiquitin ligases accept ubiquitin from an E2 ubiquitin-conjugating enzyme in the form of a thioester and then directly transfers the ubiquitin to targeted substrates. It probably triggers the ubiquitin-mediated degradation of different substrates. This Arabidopsis thaliana (Mouse-ear cress) protein is E3 ubiquitin-protein ligase SINA-like 5.